A 209-amino-acid polypeptide reads, in one-letter code: Small ribosomal subunit protein uS4 (209 aa).

The disordered stretch occupies residues 22–45; that stretch reads RGRNPLLRKPNPPGQHGMQRKKKS. The region spanning 93–154 is the S4 RNA-binding domain; that stretch reads CRLDSIVYRL…KSKRLAIVTE (62 aa).

It belongs to the universal ribosomal protein uS4 family. Part of the 30S ribosomal subunit. Contacts protein S5. The interaction surface between S4 and S5 is involved in control of translational fidelity.

In terms of biological role, one of the primary rRNA binding proteins, it binds directly to 16S rRNA where it nucleates assembly of the body of the 30S subunit. Functionally, with S5 and S12 plays an important role in translational accuracy. The protein is Small ribosomal subunit protein uS4 of Chlamydia trachomatis serovar L2 (strain ATCC VR-902B / DSM 19102 / 434/Bu).